The chain runs to 253 residues: 5'/3'-nucleotidase SurE (253 aa).

Asp-8, Asp-9, Ser-39, and Asn-92 together coordinate a divalent metal cation.

The protein belongs to the SurE nucleotidase family. The cofactor is a divalent metal cation.

The protein localises to the cytoplasm. It carries out the reaction a ribonucleoside 5'-phosphate + H2O = a ribonucleoside + phosphate. The catalysed reaction is a ribonucleoside 3'-phosphate + H2O = a ribonucleoside + phosphate. The enzyme catalyses [phosphate](n) + H2O = [phosphate](n-1) + phosphate + H(+). Nucleotidase with a broad substrate specificity as it can dephosphorylate various ribo- and deoxyribonucleoside 5'-monophosphates and ribonucleoside 3'-monophosphates with highest affinity to 3'-AMP. Also hydrolyzes polyphosphate (exopolyphosphatase activity) with the preference for short-chain-length substrates (P20-25). Might be involved in the regulation of dNTP and NTP pools, and in the turnover of 3'-mononucleotides produced by numerous intracellular RNases (T1, T2, and F) during the degradation of various RNAs. In Shigella boydii serotype 18 (strain CDC 3083-94 / BS512), this protein is 5'/3'-nucleotidase SurE.